Here is a 109-residue protein sequence, read N- to C-terminus: Large ribosomal subunit protein uL22 (109 aa).

The protein belongs to the universal ribosomal protein uL22 family. As to quaternary structure, part of the 50S ribosomal subunit.

Its function is as follows. This protein binds specifically to 23S rRNA; its binding is stimulated by other ribosomal proteins, e.g. L4, L17, and L20. It is important during the early stages of 50S assembly. It makes multiple contacts with different domains of the 23S rRNA in the assembled 50S subunit and ribosome. In terms of biological role, the globular domain of the protein is located near the polypeptide exit tunnel on the outside of the subunit, while an extended beta-hairpin is found that lines the wall of the exit tunnel in the center of the 70S ribosome. The chain is Large ribosomal subunit protein uL22 from Aromatoleum aromaticum (strain DSM 19018 / LMG 30748 / EbN1) (Azoarcus sp. (strain EbN1)).